A 122-amino-acid chain; its full sequence is Large ribosomal subunit protein uL14 (122 aa).

It belongs to the universal ribosomal protein uL14 family. Part of the 50S ribosomal subunit. Forms a cluster with proteins L3 and L19. In the 70S ribosome, L14 and L19 interact and together make contacts with the 16S rRNA in bridges B5 and B8.

Functionally, binds to 23S rRNA. Forms part of two intersubunit bridges in the 70S ribosome. In Synechococcus sp. (strain JA-3-3Ab) (Cyanobacteria bacterium Yellowstone A-Prime), this protein is Large ribosomal subunit protein uL14.